We begin with the raw amino-acid sequence, 738 residues long: Alanine--tRNA ligase (738 aa).

The Zn(2+) site is built by H564, H568, C666, and H670.

Belongs to the class-II aminoacyl-tRNA synthetase family. As to quaternary structure, homotetramer. It depends on Zn(2+) as a cofactor.

Its subcellular location is the cytoplasm. The enzyme catalyses tRNA(Ala) + L-alanine + ATP = L-alanyl-tRNA(Ala) + AMP + diphosphate. Functionally, catalyzes the attachment of alanine to tRNA(Ala) in a two-step reaction: alanine is first activated by ATP to form Ala-AMP and then transferred to the acceptor end of tRNA(Ala). Also edits incorrectly charged Ser-tRNA(Ala) and Gly-tRNA(Ala) via its editing domain. This chain is Alanine--tRNA ligase (alaS), found in Yersinia pestis bv. Antiqua (strain Antiqua).